The following is a 370-amino-acid chain: MAKSHLPPWLLLLLLPTLCGPGTAVWATSPLACAQGPEFWCQSLEQALQCKALGHCLQEVWGHVGADDLCQECQDIVNILTKMTKEAIFQDTIRKFLEHECDVLPLKLLVPQCHHVLDVYFPLTITYFQSQINAKAICQHLGLCQPGSPEPPLDPLPDKLVLPTLLGALPAKPGPHTQDLSAQRFPIPLPLCWLCRTLLKRIQAMIPKGVLAMAVAQVCHVVPLVVGGICQCLAERYTVILLEVLLGHVLPQLVCGLVLRCSSVDSIGQVPPTLEALPGEWLPQDPECRLCMSVTTQARNISEQTRPQAVYHACLSSQLDKQECEQFVELHTPQLLSLLSRGWDARAICQALGACVATLSPLQCIQSPHF.

The N-terminal stretch at 1–24 (MAKSHLPPWLLLLLLPTLCGPGTA) is a signal peptide. Residues 25–184 (VWATSPLACA…PHTQDLSAQR (160 aa)) constitute a propeptide that is removed on maturation. The region spanning 26 to 66 (WATSPLACAQGPEFWCQSLEQALQCKALGHCLQEVWGHVGA) is the Saposin A-type domain. Saposin B-type domains follow at residues 66–148 (ADDL…QPGS), 188–265 (PLPL…SSVD), and 284–359 (QDPE…VATL). Cystine bridges form between Cys-70–Cys-144, Cys-73–Cys-138, Cys-101–Cys-113, Cys-192–Cys-261, Cys-195–Cys-255, Cys-219–Cys-230, Cys-288–Cys-355, Cys-291–Cys-349, and Cys-314–Cys-324. The propeptide occupies 264-370 (VDSIGQVPPT…PLQCIQSPHF (107 aa)). Residue Asn-300 is glycosylated (N-linked (GlcNAc...) asparagine).

As to quaternary structure, homodimer; disulfide-linked.

Its subcellular location is the secreted. The protein localises to the extracellular space. It is found in the surface film. Pulmonary surfactant-associated proteins promote alveolar stability by lowering the surface tension at the air-liquid interface in the peripheral air spaces. SP-B increases the collapse pressure of palmitic acid to nearly 70 millinewtons per meter. The polypeptide is Pulmonary surfactant-associated protein B (SFTPB) (Oryctolagus cuniculus (Rabbit)).